Here is a 394-residue protein sequence, read N- to C-terminus: G2/mitotic-specific cyclin-B2 (394 aa).

Belongs to the cyclin family. Cyclin AB subfamily. Interacts with the CDK1 protein kinase to form a serine/threonine kinase holoenzyme complex also known as maturation promoting factor (MPF). The cyclin subunit imparts substrate specificity to the complex.

Its function is as follows. Essential for the control of the cell cycle at the G2/M (mitosis) transition. In Anguilla japonica (Japanese eel), this protein is G2/mitotic-specific cyclin-B2 (ccnb2).